A 492-amino-acid polypeptide reads, in one-letter code: N-succinylglutamate 5-semialdehyde dehydrogenase (492 aa).

220–225 (GSASTG) is an NAD(+) binding site. Catalysis depends on residues glutamate 243 and cysteine 277.

Belongs to the aldehyde dehydrogenase family. AstD subfamily.

The catalysed reaction is N-succinyl-L-glutamate 5-semialdehyde + NAD(+) + H2O = N-succinyl-L-glutamate + NADH + 2 H(+). It participates in amino-acid degradation; L-arginine degradation via AST pathway; L-glutamate and succinate from L-arginine: step 4/5. Catalyzes the NAD-dependent reduction of succinylglutamate semialdehyde into succinylglutamate. This chain is N-succinylglutamate 5-semialdehyde dehydrogenase, found in Salmonella typhimurium (strain LT2 / SGSC1412 / ATCC 700720).